The sequence spans 909 residues: Protein translocase subunit SecA (909 aa).

ATP is bound by residues glutamine 87, 105–109 (GEGKT), and aspartate 507. Disordered stretches follow at residues 567–586 (RRID…PGSS) and 859–909 (YSEA…GKLD). Residues 865 to 889 (EHQSVTEGHEAKQQPFVRKSDKIGR) show a composition bias toward basic and acidic residues. Zn(2+) is bound by residues cysteine 893, cysteine 895, cysteine 904, and histidine 905. The span at 899–909 (RKYKQCHGKLD) shows a compositional bias: basic residues.

It belongs to the SecA family. As to quaternary structure, monomer and homodimer. Part of the essential Sec protein translocation apparatus which comprises SecA, SecYEG and auxiliary proteins SecDF-YajC and YidC. Zn(2+) is required as a cofactor.

It is found in the cell inner membrane. Its subcellular location is the cytoplasm. It catalyses the reaction ATP + H2O + cellular proteinSide 1 = ADP + phosphate + cellular proteinSide 2.. In terms of biological role, part of the Sec protein translocase complex. Interacts with the SecYEG preprotein conducting channel. Has a central role in coupling the hydrolysis of ATP to the transfer of proteins into and across the cell membrane, serving both as a receptor for the preprotein-SecB complex and as an ATP-driven molecular motor driving the stepwise translocation of polypeptide chains across the membrane. This Nitrosomonas eutropha (strain DSM 101675 / C91 / Nm57) protein is Protein translocase subunit SecA.